Reading from the N-terminus, the 171-residue chain is Large ribosomal subunit protein uL5 (171 aa).

The protein belongs to the universal ribosomal protein uL5 family. Part of the 50S ribosomal subunit; contacts the 5S rRNA and probably tRNA. Forms a bridge to the 30S subunit in the 70S ribosome.

Functionally, this is one of the proteins that bind and probably mediate the attachment of the 5S RNA into the large ribosomal subunit, where it forms part of the central protuberance. In the 70S ribosome it contacts protein S13 of the 30S subunit (bridge B1b), connecting the 2 subunits; this bridge is implicated in subunit movement. May contact the P site tRNA; the 5S rRNA and some of its associated proteins might help stabilize positioning of ribosome-bound tRNAs. This is Large ribosomal subunit protein uL5 from Methanocorpusculum labreanum (strain ATCC 43576 / DSM 4855 / Z).